We begin with the raw amino-acid sequence, 424 residues long: Elongation factor Tu, mitochondrial (424 aa).

In terms of domain architecture, tr-type G spans 36–234 (KPHVNVGTIG…VLDTKIPLPH (199 aa)). The G1 stretch occupies residues 45–52 (GHVDHGKT). GTP is bound at residue 45–52 (GHVDHGKT). A G2 region spans residues 86–90 (GITIT). The interval 107–110 (DCPG) is G3. GTP contacts are provided by residues 107-111 (DCPGH) and 162-165 (NKMD). Positions 162–165 (NKMD) are G4. Residues 199-201 (AAA) are G5.

Belongs to the TRAFAC class translation factor GTPase superfamily. Classic translation factor GTPase family. EF-Tu/EF-1A subfamily.

Its subcellular location is the mitochondrion. This protein promotes the GTP-dependent binding of aminoacyl-tRNA to the A-site of ribosomes during protein biosynthesis. In Dictyostelium discoideum (Social amoeba), this protein is Elongation factor Tu, mitochondrial (tufm).